Consider the following 260-residue polypeptide: tRNA pseudouridine synthase C (260 aa).

D54 is an active-site residue.

It belongs to the pseudouridine synthase RluA family.

It catalyses the reaction uridine(65) in tRNA = pseudouridine(65) in tRNA. In terms of biological role, responsible for synthesis of pseudouridine from uracil-65 in transfer RNAs. The protein is tRNA pseudouridine synthase C (truC) of Salmonella typhimurium (strain LT2 / SGSC1412 / ATCC 700720).